A 238-amino-acid chain; its full sequence is Endothelin-3 (238 aa).

Residues 1-16 form the signal peptide; it reads MEPGLWLLFGLTVTSA. The propeptide occupies 17–94; that stretch reads AGFVPCSQSG…AEGAPEHHRS (78 aa). Positions 24–89 are disordered; sequence QSGDAGRRGV…GQEQAAEGAP (66 aa). Cystine bridges form between C97-C111 and C99-C107. The propeptide occupies 118-238; it reads INTPEQTVPY…PRCLFQEGAP (121 aa). The endothelin-like stretch occupies residues 159-173; it reads CACVGRYDKACLHFC. The interval 183-219 is disordered; the sequence is SRTAEKTDKEEEGKVEVKDQQSKQALDLHHPKLMPGS. A compositionally biased stretch (basic and acidic residues) spans 185 to 212; the sequence is TAEKTDKEEEGKVEVKDQQSKQALDLHH.

It belongs to the endothelin/sarafotoxin family. As to expression, expressed in trophoblasts and placental stem villi vessels, but not in cultured placental smooth muscle cells.

Its subcellular location is the secreted. Endothelins are endothelium-derived vasoconstrictor peptides. This chain is Endothelin-3 (EDN3), found in Homo sapiens (Human).